Consider the following 128-residue polypeptide: NADH-quinone oxidoreductase subunit A (128 aa).

3 helical membrane-spanning segments follow: residues 12 to 32 (FAIF…LSFL), 66 to 86 (FYLI…LYAW), and 96 to 116 (LGFY…VYLV).

Belongs to the complex I subunit 3 family. As to quaternary structure, NDH-1 is composed of 14 different subunits. Subunits NuoA, H, J, K, L, M, N constitute the membrane sector of the complex.

It is found in the cell membrane. It catalyses the reaction a quinone + NADH + 5 H(+)(in) = a quinol + NAD(+) + 4 H(+)(out). Functionally, NDH-1 shuttles electrons from NADH, via FMN and iron-sulfur (Fe-S) centers, to quinones in the respiratory chain. The immediate electron acceptor for the enzyme in this species is believed to be ubiquinone. Couples the redox reaction to proton translocation (for every two electrons transferred, four hydrogen ions are translocated across the cytoplasmic membrane), and thus conserves the redox energy in a proton gradient. In Baumannia cicadellinicola subsp. Homalodisca coagulata, this protein is NADH-quinone oxidoreductase subunit A.